The sequence spans 637 residues: tRNA uridine 5-carboxymethylaminomethyl modification enzyme MnmG (637 aa).

Residues 15–20, Ile127, and Ser182 each bind FAD; that span reads GAGHAG. NAD(+) is bound at residue 276 to 290; that stretch reads GPRYCPSIEDKIVRF. Position 373 (Gln373) interacts with FAD.

It belongs to the MnmG family. As to quaternary structure, homodimer. Heterotetramer of two MnmE and two MnmG subunits. FAD is required as a cofactor.

The protein localises to the cytoplasm. NAD-binding protein involved in the addition of a carboxymethylaminomethyl (cmnm) group at the wobble position (U34) of certain tRNAs, forming tRNA-cmnm(5)s(2)U34. The polypeptide is tRNA uridine 5-carboxymethylaminomethyl modification enzyme MnmG (Streptococcus pneumoniae serotype 4 (strain ATCC BAA-334 / TIGR4)).